A 156-amino-acid polypeptide reads, in one-letter code: Nucleosome assembly protein 1-like 5 (156 aa).

Residues methionine 1–aspartate 16 show a composition bias toward basic and acidic residues. The disordered stretch occupies residues methionine 1–glutamate 58. A compositionally biased stretch (low complexity) spans alanine 34–alanine 49. The stretch at valine 68 to lysine 94 forms a coiled coil. Residues threonine 120–lysine 156 are disordered. Residues glutamate 122 to alanine 143 are compositionally biased toward acidic residues.

It belongs to the nucleosome assembly protein (NAP) family.

Its subcellular location is the nucleus. This Mus musculus (Mouse) protein is Nucleosome assembly protein 1-like 5 (Nap1l5).